We begin with the raw amino-acid sequence, 700 residues long: Beta-galactosidase Bga (700 aa).

Arg103 contacts substrate. Cys107 is a binding site for Zn(2+). Asn141 serves as a coordination point for substrate. Catalysis depends on Glu142, which acts as the Proton donor. 3 residues coordinate Zn(2+): Cys151, Cys153, and Cys156. Glu312 functions as the Nucleophile in the catalytic mechanism. Substrate is bound by residues Trp320 and 360–363 (EQYH). Over residues 648–658 (DPESLAVDDTD) the composition is skewed to acidic residues. The tract at residues 648–674 (DPESLAVDDTDRDGFDPMADDDKDSSA) is disordered.

It belongs to the glycosyl hydrolase 42 family.

It carries out the reaction Hydrolysis of terminal non-reducing beta-D-galactose residues in beta-D-galactosides.. Its activity is regulated as follows. Requires 4 M NaCl or KCl for maximal activity. Its function is as follows. Cleaves o-nitrophenyl-beta-D-galactopyranoside (ONPG) in vitro. This Halorubrum lacusprofundi (strain ATCC 49239 / DSM 5036 / JCM 8891 / ACAM 34) protein is Beta-galactosidase Bga.